The following is an 852-amino-acid chain: MAKEKISPGMQQYLDIKKNYPDAFLLFRMGDFYELFYDDAVKAAQILEISLTSRNKNADNPIPMAGVPYHSAQAYIDVLVEMGYKVAIAEQMEDPKQAVGVVKREVVQVITPGTVVDSSKPDSANNFLVAIDKVGSRFGLSYMDVSTGEFFATELDDFSSVCSEIQNLKAREVVVGYDLLETDEQVLVNQLNLLLSKETEGYDDVHLIGNSLTDLESSVASKLLQYVHRTQMRELSHLQKAQHYEIKDYLQMSYATKSSLDLLENARTGKKHGSLFWLLDKTKTAMGMRLLRTWIDRPLVNQASIIERQNIIQVFLDNFFERSDLAESLKGVYDIERLASRVSFGKANPKDLIQLGHTLAQVPVIKAILESFNDDALSGLLQELDALPELESLIRSAIDPDAPATITEGGIIRDGFDETLDKYRKVMSEGTSWIADIEAKEREASGITTLKIDYNRKDGYYFHVTNSNLSLVPDHFFRKATLKNSERFGTAELAKIEGEMLEAREKSSTLEYDIFMRVREQVERYIDRLQSLAKAIATVDVLQSLAVTAETNHYVRPVFNDEHRIAIDRGRHAVVEKVMGVQEYIPNTITFDSQTNIQLITGPNMSGKSTYMRQLALSVVMAQMGAYVPADSVDLPVFDAIYTRIGAADDLISGQSTFMVEMMEANQAIKRATPNSLIIFDELGRGTATYDGMALAQSIIEFIHDKVGAKTMFATHYHELTALSNSLTHLVNVHVATLEKDGEVTFLHKIVDGPADKSYGIHVAKIAGLPTDLLNRADTILTQLEGETVVIQPQEKVLSQEKPAIETHVNEQISLFDDFTENPVLQELRDLDIYNMTPMQVMMAVADLKQKL.

602–609 contacts ATP; that stretch reads GPNMSGKS.

It belongs to the DNA mismatch repair MutS family.

In terms of biological role, this protein is involved in the repair of mismatches in DNA. It is possible that it carries out the mismatch recognition step. This protein has a weak ATPase activity. The protein is DNA mismatch repair protein MutS of Streptococcus thermophilus (strain CNRZ 1066).